A 593-amino-acid polypeptide reads, in one-letter code: Scarecrow-like protein 1 (593 aa).

Disordered stretches follow at residues 29–61 and 188–216; these read NPKL…PCLT and YQNE…SKEV. The segment covering 35 to 48 has biased composition (polar residues); the sequence is LNENGNNNGVSSAQ. Residues 202 to 211 show a composition bias toward low complexity; the sequence is SSSADSNSHV. Residues 213–593 enclose the GRAS domain; it reads SKEVVSQATP…KSLIVASAWR (381 aa). Residues 220-280 are leucine repeat I (LRI); the sequence is ATPKQILISC…AARMAASGKF (61 aa). Positions 299 to 364 are VHIID; the sequence is MQVLFEVCPC…GKRPRLRLTG (66 aa). The VHIID signature appears at 330 to 334; the sequence is VHIID. The tract at residues 380–411 is leucine repeat II (LRII); sequence IIGLRLEQLAEDNGVSFKFKAMPSKTSIVSPS. Residues 421 to 515 are PFYRE; that stretch reads LIVNFAFQLH…RQCLARDIVN (95 aa). An SAW region spans residues 518 to 593; the sequence is ACEGEERIER…KSLIVASAWR (76 aa).

The protein belongs to the GRAS family. As to expression, expressed in seedlings, roots, shoots, leaves, flowers and siliques.

Its subcellular location is the nucleus. Functionally, probable transcription factor involved in plant development. This chain is Scarecrow-like protein 1 (SCL1), found in Arabidopsis thaliana (Mouse-ear cress).